The following is a 193-amino-acid chain: Interferon type A1/A2 (193 aa).

Positions 1-31 are cleaved as a signal peptide; sequence MAVPASPQHPRGYGILLLTLLLKALATTASA. Cystine bridges form between Cys32/Cys129, Cys61/Cys155, and Cys68/Cys168. Residues Asn65, Asn71, Asn108, and Asn186 are each glycosylated (N-linked (GlcNAc...) asparagine).

The protein belongs to the alpha/beta interferon family.

Its subcellular location is the secreted. Has antiviral activities. In Gallus gallus (Chicken), this protein is Interferon type A1/A2 (IFNA1).